The chain runs to 337 residues: Phosphate acyltransferase (337 aa).

This sequence belongs to the PlsX family. Homodimer. Probably interacts with PlsY.

It localises to the cytoplasm. It catalyses the reaction a fatty acyl-[ACP] + phosphate = an acyl phosphate + holo-[ACP]. The protein operates within lipid metabolism; phospholipid metabolism. Catalyzes the reversible formation of acyl-phosphate (acyl-PO(4)) from acyl-[acyl-carrier-protein] (acyl-ACP). This enzyme utilizes acyl-ACP as fatty acyl donor, but not acyl-CoA. The protein is Phosphate acyltransferase of Ehrlichia chaffeensis (strain ATCC CRL-10679 / Arkansas).